We begin with the raw amino-acid sequence, 267 residues long: Large ribosomal subunit protein bL9m (267 aa).

The N-terminal 52 residues, 1 to 52 (MAALVVTEPGRALLRAGTERLLRGGIQELLRPRHEGNSPGLARDFSLSQNRG), are a transit peptide targeting the mitochondrion.

Belongs to the bacterial ribosomal protein bL9 family. In terms of assembly, component of the mitochondrial ribosome large subunit (39S) which comprises a 16S rRNA and about 50 distinct proteins.

It localises to the mitochondrion. The polypeptide is Large ribosomal subunit protein bL9m (MRPL9) (Papio anubis (Olive baboon)).